The sequence spans 506 residues: Putative transporter SVOPL (506 aa).

10 helical membrane passes run 57–77 (SIGF…ANIV), 104–124 (ALVS…CGYI), 133–153 (VVFG…FSTS), 190–210 (LLPL…VLGM), 220–240 (WMIR…MFIP), 297–317 (TSLL…GSVL), 362–382 (LISC…LNIV), 397–417 (FFFM…LLFL), 444–464 (IGMG…PFIA), and 472–492 (VILA…GVFF).

Belongs to the major facilitator superfamily.

It is found in the membrane. The chain is Putative transporter SVOPL (svopl) from Danio rerio (Zebrafish).